Reading from the N-terminus, the 172-residue chain is Trypsin inhibitor 1A (172 aa).

Disulfide bonds link C40–C84 and C133–C139.

This sequence belongs to the protease inhibitor I3 (leguminous Kunitz-type inhibitor) family.

Its function is as follows. WTI-1B inhibits trypsin stoichiometrically. The chain is Trypsin inhibitor 1A from Psophocarpus tetragonolobus (Winged bean).